A 516-amino-acid chain; its full sequence is Beta-glucosidase 1 (516 aa).

The N-terminal stretch at 1–21 is a signal peptide; sequence MGHRLVVVLLLALLVAGAARA. An a beta-D-glucoside-binding site is contributed by Q68. The N-linked (GlcNAc...) asparagine glycan is linked to N96. Residues H169 and 214-215 contribute to the a beta-D-glucoside site; that span reads NE. E215 acts as the Proton donor in catalysis. A disulfide bond links C234 and C237. N290 carries an N-linked (GlcNAc...) asparagine glycan. Residue Y353 coordinates a beta-D-glucoside. N-linked (GlcNAc...) asparagine glycosylation occurs at N364. Residue E424 coordinates a beta-D-glucoside. E424 serves as the catalytic Nucleophile. N432 carries an N-linked (GlcNAc...) asparagine glycan. A beta-D-glucoside-binding positions include W471, 478–479, and F487; that span reads EW.

This sequence belongs to the glycosyl hydrolase 1 family.

It carries out the reaction Hydrolysis of terminal, non-reducing beta-D-glucosyl residues with release of beta-D-glucose.. This is Beta-glucosidase 1 (BGLU1) from Oryza sativa subsp. japonica (Rice).